Reading from the N-terminus, the 102-residue chain is Putative septation protein SpoVG 1 (102 aa).

Belongs to the SpoVG family.

Functionally, could be involved in septation. The protein is Putative septation protein SpoVG 1 of Listeria innocua serovar 6a (strain ATCC BAA-680 / CLIP 11262).